A 363-amino-acid polypeptide reads, in one-letter code: Zinc phosphodiesterase ELAC protein 1 (363 aa).

Zn(2+) contacts are provided by His-62, His-64, Asp-66, His-67, His-182, Asp-253, and His-313. Residue Asp-66 is the Proton acceptor of the active site.

This sequence belongs to the RNase Z family. As to quaternary structure, homodimer. Zn(2+) serves as cofactor.

Its subcellular location is the cytoplasm. It localises to the cytosol. It is found in the nucleus. The enzyme catalyses Endonucleolytic cleavage of RNA, removing extra 3' nucleotides from tRNA precursor, generating 3' termini of tRNAs. A 3'-hydroxy group is left at the tRNA terminus and a 5'-phosphoryl group is left at the trailer molecule.. In terms of biological role, zinc phosphodiesterase, which displays some tRNA 3'-processing endonuclease activity. Specifically involved in tRNA repair: acts downstream of the ribosome-associated quality control (RQC) pathway by removing a 2',3'-cyclic phosphate from tRNAs following cleavage by ANKZF1. tRNAs are then processed by TRNT1. The polypeptide is Zinc phosphodiesterase ELAC protein 1 (ELAC1) (Bos taurus (Bovine)).